The following is a 384-amino-acid chain: S-adenosylmethionine synthase (384 aa).

His-15 contacts ATP. Asp-17 provides a ligand contact to Mg(2+). Glu-43 lines the K(+) pocket. L-methionine-binding residues include Glu-56 and Gln-99. Positions 99–109 (QSPDINQGVDK) are flexible loop. Residues 164–166 (DAK), 230–231 (RF), Asp-239, 245–246 (RK), Ala-262, and Lys-266 each bind ATP. L-methionine is bound at residue Asp-239. Lys-270 is an L-methionine binding site.

Belongs to the AdoMet synthase family. In terms of assembly, homotetramer; dimer of dimers. Requires Mg(2+) as cofactor. It depends on K(+) as a cofactor.

Its subcellular location is the cytoplasm. The catalysed reaction is L-methionine + ATP + H2O = S-adenosyl-L-methionine + phosphate + diphosphate. The protein operates within amino-acid biosynthesis; S-adenosyl-L-methionine biosynthesis; S-adenosyl-L-methionine from L-methionine: step 1/1. Catalyzes the formation of S-adenosylmethionine (AdoMet) from methionine and ATP. The overall synthetic reaction is composed of two sequential steps, AdoMet formation and the subsequent tripolyphosphate hydrolysis which occurs prior to release of AdoMet from the enzyme. This is S-adenosylmethionine synthase from Vibrio vulnificus (strain YJ016).